A 791-amino-acid polypeptide reads, in one-letter code: MSQPRPRYVVDRAAYSLTLFDDEFEKKDRTYPVGEKLRNAFRCSSAKIKAVVFGLLPVLSWLPKYKIKDYIIPDLLGGLSGGSIQVPQGMAFALLANLPAVNGLYSSFFPLLTYFFLGGVHQMVPGTFAVISILVGNICLQLAPESKFQVFNNATNESYVDTAAMEAERLHVSATLACLTAIIQMGLGFMQFGFVAIYLSESFIRGFMTAAGLQILISVLKYIFGLTIPSYTGPGSIVFTFIDICKNLPHTNIASLIFALISGAFLVLVKELNARYMHKIRFPIPTEMIVVVVATAISGGCKMPKKYHMQIVGEIQRGFPTPVSPVVSQWKDMIGTAFSLAIVSYVINLAMGRTLANKHGYDVDSNQEMIALGCSNFFGSFFKIHVICCALSVTLAVDGAGGKSQVASLCVSLVVMITMLVLGIYLYPLPKSVLGALIAVNLKNSLKQLTDPYYLWRKSKLDCCIWVVSFLSSFFLSLPYGVAVGVAFSVLVVVFQTQFRNGYALAQVMDTDIYVNPKTYNRAQDIQGIKIITYCSPLYFANSEIFRQKVIAKTGMDPQKVLLAKQKYLKKQEKRRMRPTQQRRSLFMKTKTVSLQELQQDFENAPPTDPNNNQTPANGTSVSYITFSPDSSSPAQSEPPASAEAPGEPSDMLASVPPFVTFHTLILDMSGVSFVDLMGIKALAKLSSTYGKIGVKVFLVNIHAQVYNDISHGGVFEDGSLECKHVFPSIHDAVLFAQANARDVTPGHNFQGAPGDAELSLYDSEEDIRSYWDLEQEMFGSMFHAETLTAL.

At Met-1–Tyr-70 the chain is on the cytoplasmic side. A helical membrane pass occupies residues Ile-71–Ala-96. At Asn-97–Pro-99 the chain is on the extracellular side. A helical transmembrane segment spans residues Ala-100–Leu-117. Over Gly-118 to Phe-128 the chain is Cytoplasmic. The helical transmembrane segment at Ala-129–Leu-142 threads the bilayer. Topologically, residues Ala-143–His-171 are extracellular. The helical transmembrane segment at Val-172 to Met-190 threads the bilayer. Residues Gln-191 to Ser-202 are Cytoplasmic-facing. Residues Phe-203–Phe-224 form a helical membrane-spanning segment. Topologically, residues Gly-225–Gly-235 are extracellular. Positions Ser-236–Ile-244 form an intramembrane region, helical. Residues Cys-245–Ala-254 lie on the Extracellular side of the membrane. A helical transmembrane segment spans residues Ser-255–Asn-273. Topologically, residues Ala-274–Arg-281 are cytoplasmic. Residues Phe-282–Ile-297 form a helical membrane-spanning segment. The Extracellular segment spans residues Ser-298 to Val-327. The chain crosses the membrane as a helical span at residues Ser-328–Asn-348. Over Leu-349–Asn-366 the chain is Cytoplasmic. Residues Gln-367–Phe-382 form a helical membrane-spanning segment. Over Lys-383–Ala-390 the chain is Extracellular. A helical membrane pass occupies residues Leu-391–Ala-400. The Cytoplasmic portion of the chain corresponds to Gly-401–Ser-404. The chain crosses the membrane as a helical span at residues Gln-405–Gly-423. The Extracellular segment spans residues Ile-424 to Pro-428. A helical transmembrane segment spans residues Leu-429–Thr-450. Residues Asp-451–Cys-464 are Cytoplasmic-facing. A helical transmembrane segment spans residues Ile-465–Leu-476. Ser-477 is a topological domain (extracellular). Residues Leu-478–Ser-489 form a helical membrane-spanning segment. The Cytoplasmic portion of the chain corresponds to Val-490–Leu-791. In terms of domain architecture, STAS spans Thr-519–Ala-737. Positions Phe-602–Ser-650 are disordered. Polar residues predominate over residues Pro-610–Thr-626. The segment covering Ser-628–Ser-650 has biased composition (low complexity).

Belongs to the SLC26A/SulP transporter (TC 2.A.53) family. In terms of assembly, homodimer. In terms of tissue distribution, predominantly expressed in lung at the luminal side of the bronchiolar and alveolar epithelium of lung. To a lower extent, also expressed in pancreas and prostate.

It localises to the cell membrane. Its subcellular location is the endomembrane system. The catalysed reaction is chloride(in) = chloride(out). It catalyses the reaction hydrogencarbonate(in) + chloride(out) = hydrogencarbonate(out) + chloride(in). Its activity is regulated as follows. Inhibited by ammonium and thiosulfate. Functionally, ion transporter that can act both as an ion channel and anion exchanger. Mainly acts as a chloride channel, which mediate uncoupled chloride anion transport in an alternate-access mechanism where a saturable binding site is alternately exposed to either one or the other side of the membrane. Also acts as a DIDS- and thiosulfate- sensitive anion exchanger the exchange of chloride for bicarbonate ions across the cell membrane. This Homo sapiens (Human) protein is Solute carrier family 26 member 9.